We begin with the raw amino-acid sequence, 322 residues long: Secretion system apparatus protein SsaQ (322 aa).

This sequence belongs to the FliN/MopA/SpaO family.

In terms of biological role, part of a type III secretion system. The sequence is that of Secretion system apparatus protein SsaQ (ssaQ) from Salmonella typhimurium (strain LT2 / SGSC1412 / ATCC 700720).